The primary structure comprises 84 residues: MSTKLFSYFMLLVVLFSVLTIIPKTEAQKRCRQELEPGKQCVLAKCRELCFKQLKGFGSCIEKPPGSSKYTCNCFYNCGPPGFF.

Residues 1–27 (MSTKLFSYFMLLVVLFSVLTIIPKTEA) form the signal peptide. 4 cysteine pairs are disulfide-bonded: Cys31/Cys78, Cys41/Cys60, Cys46/Cys72, and Cys50/Cys74.

The protein belongs to the DEFL family.

It is found in the secreted. This is Putative defensin-like protein 165 (LCR12) from Arabidopsis thaliana (Mouse-ear cress).